We begin with the raw amino-acid sequence, 500 residues long: Glycerol kinase (500 aa).

Thr-11 contributes to the ADP binding site. The ATP site is built by Thr-11, Thr-12, and Ser-13. Thr-11 provides a ligand contact to sn-glycerol 3-phosphate. Arg-15 serves as a coordination point for ADP. Sn-glycerol 3-phosphate is bound by residues Arg-81, Glu-82, Tyr-133, and Asp-242. Residues Arg-81, Glu-82, Tyr-133, Asp-242, and Gln-243 each coordinate glycerol. Residues Thr-264 and Gly-307 each coordinate ADP. ATP is bound by residues Thr-264, Gly-307, Gln-311, and Gly-411. Residue Gly-411 coordinates ADP.

Belongs to the FGGY kinase family.

It catalyses the reaction glycerol + ATP = sn-glycerol 3-phosphate + ADP + H(+). Its pathway is polyol metabolism; glycerol degradation via glycerol kinase pathway; sn-glycerol 3-phosphate from glycerol: step 1/1. Inhibited by fructose 1,6-bisphosphate (FBP). Key enzyme in the regulation of glycerol uptake and metabolism. Catalyzes the phosphorylation of glycerol to yield sn-glycerol 3-phosphate. The protein is Glycerol kinase of Bradyrhizobium diazoefficiens (strain JCM 10833 / BCRC 13528 / IAM 13628 / NBRC 14792 / USDA 110).